A 192-amino-acid chain; its full sequence is Adenylate kinase (192 aa).

10-15 provides a ligand contact to ATP; that stretch reads GAGKGT. The tract at residues 30-59 is NMP; that stretch reads STGDMLREVIAKETEVGKKAKAIISSGALV. Residues Thr-31, Arg-36, 57 to 59, 85 to 88, and Gln-92 each bind AMP; these read ALV and GYPR. The LID stretch occupies residues 126 to 142; sequence RRVQETVAAGGQVRLDD. Arg-127 serves as a coordination point for ATP. Residues Arg-139 and Arg-150 each contribute to the AMP site. Ile-178 contacts ATP.

The protein belongs to the adenylate kinase family. Monomer.

The protein localises to the cytoplasm. It carries out the reaction AMP + ATP = 2 ADP. It functions in the pathway purine metabolism; AMP biosynthesis via salvage pathway; AMP from ADP: step 1/1. In terms of biological role, catalyzes the reversible transfer of the terminal phosphate group between ATP and AMP. Plays an important role in cellular energy homeostasis and in adenine nucleotide metabolism. The polypeptide is Adenylate kinase (Bartonella tribocorum (strain CIP 105476 / IBS 506)).